The sequence spans 977 residues: Pro-apoptotic serine protease NMA111 (977 aa).

The segment at 1 to 36 (MTIQAHKRTLSEVSTSSVGQLKRREGYTEDYTDEGS) is disordered. Residues 64–254 (VVSVHFAQVA…LPLDRILRAL (191 aa)) form a serine protease region. Catalysis depends on charge relay system residues H102, D133, and S216. 2 PDZ domains span residues 271–356 (QWLL…LVVQ) and 749–835 (SVLQ…VRKG).

Belongs to the peptidase S1C family.

It is found in the nucleus. Nuclear serine protease which mediates apoptosis. The protein is Pro-apoptotic serine protease NMA111 (NMA111) of Eremothecium gossypii (strain ATCC 10895 / CBS 109.51 / FGSC 9923 / NRRL Y-1056) (Yeast).